We begin with the raw amino-acid sequence, 114 residues long: Large ribosomal subunit protein bL19 (114 aa).

The protein belongs to the bacterial ribosomal protein bL19 family.

Its function is as follows. This protein is located at the 30S-50S ribosomal subunit interface and may play a role in the structure and function of the aminoacyl-tRNA binding site. The chain is Large ribosomal subunit protein bL19 (rplS) from Listeria innocua serovar 6a (strain ATCC BAA-680 / CLIP 11262).